We begin with the raw amino-acid sequence, 419 residues long: MPAENSPAPAYKVSSHGGDSGLDGLGGPGVQLGSPDKKKRKANTQGPSFPPLSEYAPPPNPNSDHLVAANPFDDNYNTISYKPLPSSNPYLGPGYPGFGGYSTFRMPPHVPPRMSSPYCGPYSLRNQPHPFPQNPLGMGFNRPHAFNFGPHDNSSFGNPSYNNALSQNVNMPNQHFRQNPAENFSQIPPQNASQVSNPDLASNFVPGNNSNFTSPLESNHSFIPPPNTFGQAKAPPPKQDFTQGATKNTNQNSSAHPPHLNMDDTVNQSNIELKNVNRNNAVNQENSRSSSTEATNNNPANGTQNKPRQPRGAADACTTEKSNKSSLHPNRHGHSSSDPVYPCGICTNEVNDDQDAILCEASCQKWFHRICTGMTETAYGLLTAEASAVWGCDTCMADKDVQLMRTRETFGPSAVGSDA.

2 disordered regions span residues 1–64 (MPAE…PNSD) and 175–338 (HFRQ…SSSD). Residues 18 to 30 (GDSGLDGLGGPGV) show a composition bias toward gly residues. A Nuclear localization signal motif is present at residues 35 to 41 (PDKKKRK). 2 stretches are compositionally biased toward polar residues: residues 175–221 (HFRQ…SNHS) and 240–255 (DFTQGATKNTNQNSSA). Over residues 276-286 (VNRNNAVNQEN) the composition is skewed to low complexity. Over residues 287 to 307 (SRSSSTEATNNNPANGTQNKP) the composition is skewed to polar residues. Residues 340 to 398 (VYPCGICTNEVNDDQDAILCEASCQKWFHRICTGMTETAYGLLTAEASAVWGCDTCMAD) form a PHD-type zinc finger. An interaction with H3K4me2 region spans residues 341-388 (YPCGICTNEVNDDQDAILCEASCQKWFHRICTGMTETAYGLLTAEASA). The segment at 373–391 (GMTETAYGLLTAEASAVWG) is interaction with BCL9.

Interacts with BCL9 via The PHD-type zinc finger motiv, and thereby becomes part of the nuclear beta-catenin/TCF complex. Identified in a complex with BCL9L, CDC73, CTNNB1 and PYGO1. Interacts with histone H3 mono-, di- or tri-methylated at 'Lys4' (H3K4me1, H3K4me2, H3K4me3); the interaction is enhanced by the interaction with BCL9.

The protein localises to the nucleus. Its function is as follows. Involved in signal transduction through the Wnt pathway. The protein is Pygopus homolog 1 (PYGO1) of Homo sapiens (Human).